The chain runs to 172 residues: 3-hydroxydecanoyl-[acyl-carrier-protein] dehydratase (172 aa).

H71 is an active-site residue.

Belongs to the thioester dehydratase family. FabA subfamily. In terms of assembly, homodimer.

Its subcellular location is the cytoplasm. The catalysed reaction is a (3R)-hydroxyacyl-[ACP] = a (2E)-enoyl-[ACP] + H2O. It carries out the reaction (3R)-hydroxydecanoyl-[ACP] = (2E)-decenoyl-[ACP] + H2O. It catalyses the reaction (2E)-decenoyl-[ACP] = (3Z)-decenoyl-[ACP]. It participates in lipid metabolism; fatty acid biosynthesis. Its function is as follows. Necessary for the introduction of cis unsaturation into fatty acids. Catalyzes the dehydration of (3R)-3-hydroxydecanoyl-ACP to E-(2)-decenoyl-ACP and then its isomerization to Z-(3)-decenoyl-ACP. Can catalyze the dehydratase reaction for beta-hydroxyacyl-ACPs with saturated chain lengths up to 16:0, being most active on intermediate chain length. The polypeptide is 3-hydroxydecanoyl-[acyl-carrier-protein] dehydratase (Brucella ovis (strain ATCC 25840 / 63/290 / NCTC 10512)).